The primary structure comprises 125 residues: Ribosome-binding factor A (125 aa).

This sequence belongs to the RbfA family. In terms of assembly, monomer. Binds 30S ribosomal subunits, but not 50S ribosomal subunits or 70S ribosomes.

Its subcellular location is the cytoplasm. One of several proteins that assist in the late maturation steps of the functional core of the 30S ribosomal subunit. Associates with free 30S ribosomal subunits (but not with 30S subunits that are part of 70S ribosomes or polysomes). Required for efficient processing of 16S rRNA. May interact with the 5'-terminal helix region of 16S rRNA. This is Ribosome-binding factor A from Kosmotoga olearia (strain ATCC BAA-1733 / DSM 21960 / TBF 19.5.1).